Consider the following 397-residue polypeptide: Geranylgeranyl pyrophosphate synthase AN1592 (397 aa).

Positions 1-67 (MSPPLDSALE…SHDSSASSNI (67 aa)) are disordered. Residues 13–42 (SEYKETAFPRTEKDPSQYKEHDLVTPEKEI) show a composition bias toward basic and acidic residues. A compositionally biased stretch (low complexity) spans 52–67 (SHSSHGSHDSSASSNI). Residues K120, R123, and H152 each coordinate isopentenyl diphosphate. Mg(2+) is bound by residues D159 and D163. Position 168 (R168) interacts with dimethylallyl diphosphate. R169 is an isopentenyl diphosphate binding site. 3 residues coordinate dimethylallyl diphosphate: K247, T248, and Q281. D284 contributes to the Mg(2+) binding site. Residues N288, K298, and K308 each coordinate dimethylallyl diphosphate.

Belongs to the FPP/GGPP synthase family. The cofactor is Mg(2+).

The catalysed reaction is isopentenyl diphosphate + dimethylallyl diphosphate = (2E)-geranyl diphosphate + diphosphate. The enzyme catalyses isopentenyl diphosphate + (2E)-geranyl diphosphate = (2E,6E)-farnesyl diphosphate + diphosphate. It catalyses the reaction isopentenyl diphosphate + (2E,6E)-farnesyl diphosphate = (2E,6E,10E)-geranylgeranyl diphosphate + diphosphate. It participates in secondary metabolite biosynthesis; terpenoid biosynthesis. Geranylgeranyl pyrophosphate synthase; part of the gene cluster that mediates the biosynthesis of the diterpene ent-pimara-8(14),15-diene (PD). Within the cluster, the HMG-CoA reductase AN1593 functions in the mevalonate pathway, which produces isoprenoid precursors. The geranylgeranyl pyrophosphate (GGPP) synthase AN1592 is needed in the formation of GGPP, the precursor for diterpenes. Lastly, the pimaradiene synthase pbcA performs the 2 cyclization steps that convert GGPP to ent-pimara-8(14),15-diene. The putative roles of the remaining cluster enzymes in ent-pimara-8(14),15-diene biosynthesis is unclear. The cytochrome P450 monooxygenase AN1598, the glutathione S-transferase AN1595, the oxidoreductases AN1596 and AN1597 probably function as decorative enzymes. It is possible that in biological conditions the compound is oxidized to ent-pimara-8(14),15-dien-19-oic acid, which is a bioactive diterpene compound predominant in many plant extracts. This chain is Geranylgeranyl pyrophosphate synthase AN1592, found in Emericella nidulans (strain FGSC A4 / ATCC 38163 / CBS 112.46 / NRRL 194 / M139) (Aspergillus nidulans).